The primary structure comprises 208 residues: Uracil phosphoribosyltransferase (208 aa).

5-phospho-alpha-D-ribose 1-diphosphate-binding positions include Arg-78, Arg-103, and 130–138; that span reads DPMLATGGT. Residues Ile-193 and 198–200 each bind uracil; that span reads GDA. Residue Asp-199 coordinates 5-phospho-alpha-D-ribose 1-diphosphate.

This sequence belongs to the UPRTase family. The cofactor is Mg(2+).

It catalyses the reaction UMP + diphosphate = 5-phospho-alpha-D-ribose 1-diphosphate + uracil. It functions in the pathway pyrimidine metabolism; UMP biosynthesis via salvage pathway; UMP from uracil: step 1/1. With respect to regulation, allosterically activated by GTP. In terms of biological role, catalyzes the conversion of uracil and 5-phospho-alpha-D-ribose 1-diphosphate (PRPP) to UMP and diphosphate. The polypeptide is Uracil phosphoribosyltransferase (Desulfotalea psychrophila (strain LSv54 / DSM 12343)).